The sequence spans 225 residues: Uracil-DNA glycosylase (225 aa).

Asp-64 functions as the Proton acceptor in the catalytic mechanism.

This sequence belongs to the uracil-DNA glycosylase (UDG) superfamily. UNG family.

The protein resides in the cytoplasm. It carries out the reaction Hydrolyzes single-stranded DNA or mismatched double-stranded DNA and polynucleotides, releasing free uracil.. Its function is as follows. Excises uracil residues from the DNA which can arise as a result of misincorporation of dUMP residues by DNA polymerase or due to deamination of cytosine. This chain is Uracil-DNA glycosylase, found in Lachnoclostridium phytofermentans (strain ATCC 700394 / DSM 18823 / ISDg) (Clostridium phytofermentans).